The sequence spans 192 residues: Phosphoheptose isomerase (192 aa).

An SIS domain is found at 37–192 (ITDSFKNGGK…MMLIEFEMAK (156 aa)). Substrate is bound at residue 52–54 (NGG). Zn(2+) is bound by residues H61 and E65. Substrate contacts are provided by residues E65, 93-94 (ND), 119-121 (STS), S124, and Q172. Zn(2+)-binding residues include Q172 and H180.

It belongs to the SIS family. GmhA subfamily. As to quaternary structure, homotetramer. Zn(2+) is required as a cofactor.

It is found in the cytoplasm. The enzyme catalyses 2 D-sedoheptulose 7-phosphate = D-glycero-alpha-D-manno-heptose 7-phosphate + D-glycero-beta-D-manno-heptose 7-phosphate. The protein operates within carbohydrate biosynthesis; D-glycero-D-manno-heptose 7-phosphate biosynthesis; D-glycero-alpha-D-manno-heptose 7-phosphate and D-glycero-beta-D-manno-heptose 7-phosphate from sedoheptulose 7-phosphate: step 1/1. In terms of biological role, catalyzes the isomerization of sedoheptulose 7-phosphate in D-glycero-D-manno-heptose 7-phosphate. The sequence is that of Phosphoheptose isomerase from Glaesserella parasuis serovar 5 (strain SH0165) (Haemophilus parasuis).